Consider the following 230-residue polypeptide: MFARSFSNASRTIARRSLSTRSGPAPSSLWSSRNAVIAGTTLAITALAVTSERRKVFNESAQKATSPRDSIIAQDSLKENVHKKSVRQDEFSGESTKPEASTSSDSVEKAADDAAQILEEKEAEASEPSQGAYNPETGEINWDCPCLGGMATGPCGEQFKAAFSCFVYSEAEPKGVDCVELFKVMQDCFREHPEIYGEEIDDDEAPAQEGTMEEKVEAAKEETAAPAAAP.

The transit peptide at 1-18 (MFARSFSNASRTIARRSL) directs the protein to the mitochondrion. Residues 1–22 (MFARSFSNASRTIARRSLSTRS) are compositionally biased toward polar residues. The tract at residues 1 to 30 (MFARSFSNASRTIARRSLSTRSGPAPSSLW) is disordered. The Mitochondrial matrix portion of the chain corresponds to 19-34 (STRSGPAPSSLWSSRN). The helical; Signal-anchor for type II membrane protein transmembrane segment at 35–51 (AVIAGTTLAITALAVTS) threads the bilayer. Over 52–230 (ERRKVFNESA…EETAAPAAAP (179 aa)) the chain is Mitochondrial intermembrane. Residues 58-111 (NESAQKATSPRDSIIAQDSLKENVHKKSVRQDEFSGESTKPEASTSSDSVEKAA) are disordered. Residues 59 to 68 (ESAQKATSPR) show a composition bias toward polar residues. Basic and acidic residues predominate over residues 76-90 (SLKENVHKKSVRQDE). Polar residues predominate over residues 93–105 (GESTKPEASTSSD). Disulfide bonds link Cys144/Cys146, Cys155/Cys188, and Cys165/Cys178. Positions 152–196 (TGPCGEQFKAAFSCFVYSEAEPKGVDCVELFKVMQDCFREHPEIY) constitute a CHCH domain. 2 short sequence motifs (cx9C motif) span residues 155-165 (CGEQFKAAFSC) and 178-188 (CVELFKVMQDC). Positions 195–230 (IYGEEIDDDEAPAQEGTMEEKVEAAKEETAAPAAAP) are disordered. Residues 196-206 (YGEEIDDDEAP) are compositionally biased toward acidic residues. Positions 212-223 (MEEKVEAAKEET) are enriched in basic and acidic residues.

As to quaternary structure, monomer. Requires Cu(2+) as cofactor. Zn(2+) is required as a cofactor.

It localises to the mitochondrion inner membrane. In terms of biological role, required for the import and folding of small cysteine-containing proteins (small Tim) in the mitochondrial intermembrane space (IMS). Forms a redox cycle with ERV1 that involves a disulfide relay system. Precursor proteins to be imported into the IMS are translocated in their reduced form into the mitochondria. The oxidized form of MIA40 forms a transient intermolecular disulfide bridge with the reduced precursor protein, resulting in oxidation of the precursor protein that now contains an intramolecular disulfide bond and is able to undergo folding in the IMS. The protein is Mitochondrial intermembrane space import and assembly protein 40 (MIA40) of Cryptococcus neoformans var. neoformans serotype D (strain JEC21 / ATCC MYA-565) (Filobasidiella neoformans).